The sequence spans 217 residues: Phosphatidylinositol phosphate synthase (217 aa).

2 helical membrane passes run 28–49 (LTPD…LTLF) and 55–74 (FAGA…DGAM). 31–34 (DVVT) lines the a CDP-1,2-diacyl-sn-glycerol pocket. Residues aspartate 68 and aspartate 71 each contribute to the Mg(2+) site. Residues glycine 72, arginine 76, and threonine 82 each coordinate a CDP-1,2-diacyl-sn-glycerol. Positions 89 and 93 each coordinate Mg(2+). Aspartate 93 functions as the Proton acceptor in the catalytic mechanism. Transmembrane regions (helical) follow at residues 95–112 (ISDG…AFHM), 118–136 (VIAT…YIKA), 156–173 (LIIV…FVPW), and 179–200 (VGMW…HTVW).

The protein belongs to the CDP-alcohol phosphatidyltransferase class-I family. As to quaternary structure, homodimer. It depends on Mg(2+) as a cofactor.

It is found in the cell membrane. The catalysed reaction is a CDP-1,2-diacyl-sn-glycerol + 1D-myo-inositol 3-phosphate = a 1,2-diacyl-sn-glycero-3-phospho-(1D-myo-inositol-3-phosphate) + CMP + H(+). It carries out the reaction 1,2-di-(9Z-octadecenoyl)-sn-glycero-3-cytidine-5'-diphosphate + 1D-myo-inositol 3-phosphate = 1,2-di-(9Z-octadecenoyl)-sn-glycero-3-phospho-(1D-myo-inositol-3-phosphate) + CMP + H(+). It functions in the pathway phospholipid metabolism; phosphatidylinositol phosphate biosynthesis. With respect to regulation, competitively inhibited by several inositol 1-phosphate analogs, including the phosphonate analog 1-deoxy-1-phosphonomethyl-myo-inositol (Ino-C-P). In terms of biological role, catalyzes the conjugation of the 1'-hydroxyl group of D-myo-inositol-3-phosphate (also named L-myo-inositol-1-phosphate) with a lipid tail of cytidine diphosphate diacylglycerol (CDP-DAG), forming phosphatidylinositol phosphate (PIP) and CMP. PIP is a precursor of phosphatidylinositol (PI) which is an essential lipid for mycobacteria required for formation of their cell wall. This chain is Phosphatidylinositol phosphate synthase, found in Mycobacterium bovis (strain BCG / Pasteur 1173P2).